The following is a 257-amino-acid chain: UPF0246 protein Ent638_0568 (257 aa).

This sequence belongs to the UPF0246 family.

The sequence is that of UPF0246 protein Ent638_0568 from Enterobacter sp. (strain 638).